The chain runs to 212 residues: ATP-dependent Clp protease proteolytic subunit (212 aa).

Catalysis depends on serine 113, which acts as the Nucleophile. Histidine 138 is a catalytic residue.

This sequence belongs to the peptidase S14 family. As to quaternary structure, fourteen ClpP subunits assemble into 2 heptameric rings which stack back to back to give a disk-like structure with a central cavity, resembling the structure of eukaryotic proteasomes.

Its subcellular location is the cytoplasm. The enzyme catalyses Hydrolysis of proteins to small peptides in the presence of ATP and magnesium. alpha-casein is the usual test substrate. In the absence of ATP, only oligopeptides shorter than five residues are hydrolyzed (such as succinyl-Leu-Tyr-|-NHMec, and Leu-Tyr-Leu-|-Tyr-Trp, in which cleavage of the -Tyr-|-Leu- and -Tyr-|-Trp bonds also occurs).. In terms of biological role, cleaves peptides in various proteins in a process that requires ATP hydrolysis. Has a chymotrypsin-like activity. Plays a major role in the degradation of misfolded proteins. This is ATP-dependent Clp protease proteolytic subunit from Saccharophagus degradans (strain 2-40 / ATCC 43961 / DSM 17024).